Reading from the N-terminus, the 555-residue chain is CTP synthase (555 aa).

Residues 1 to 271 (MVKRGKKTKY…DDKLAELFNI (271 aa)) are amidoligase domain. Position 19 (Ser-19) interacts with CTP. Ser-19 provides a ligand contact to UTP. Residues 20–25 (SLGKGL) and Asp-77 contribute to the ATP site. Asp-77 and Glu-145 together coordinate Mg(2+). CTP is bound by residues 152-154 (DIE), 192-197 (KTKPTQ), and Lys-228. Residues 192–197 (KTKPTQ) and Lys-228 contribute to the UTP site. One can recognise a Glutamine amidotransferase type-1 domain in the interval 297–537 (RIGIVGKYVE…VKAALEHRDA (241 aa)). Gly-358 provides a ligand contact to L-glutamine. Cys-385 functions as the Nucleophile; for glutamine hydrolysis in the catalytic mechanism. L-glutamine is bound by residues 386-389 (LGLQ), Glu-409, and Arg-466. Active-site residues include His-510 and Glu-512. The disordered stretch occupies residues 535-555 (RDAQQRQPPAEVKKLAVGKNG).

The protein belongs to the CTP synthase family. Homotetramer.

The enzyme catalyses UTP + L-glutamine + ATP + H2O = CTP + L-glutamate + ADP + phosphate + 2 H(+). It catalyses the reaction L-glutamine + H2O = L-glutamate + NH4(+). The catalysed reaction is UTP + NH4(+) + ATP = CTP + ADP + phosphate + 2 H(+). The protein operates within pyrimidine metabolism; CTP biosynthesis via de novo pathway; CTP from UDP: step 2/2. Allosterically activated by GTP, when glutamine is the substrate; GTP has no effect on the reaction when ammonia is the substrate. The allosteric effector GTP functions by stabilizing the protein conformation that binds the tetrahedral intermediate(s) formed during glutamine hydrolysis. Inhibited by the product CTP, via allosteric rather than competitive inhibition. Its function is as follows. Catalyzes the ATP-dependent amination of UTP to CTP with either L-glutamine or ammonia as the source of nitrogen. Regulates intracellular CTP levels through interactions with the four ribonucleotide triphosphates. The chain is CTP synthase from Anaeromyxobacter dehalogenans (strain 2CP-1 / ATCC BAA-258).